Consider the following 118-residue polypeptide: Transcription factor PAR2 (118 aa).

The interval 1-59 is disordered; that stretch reads MEKTLATSHTKRSSPPSPSSAVNTSSTGFNRRTRQRLSDATASVSETDVEDEDEDEEGV. The span at 19-30 shows a compositional bias: polar residues; the sequence is SSAVNTSSTGFN. In terms of domain architecture, bHLH spans 43-92; the sequence is SVSETDVEDEDEDEEGVEEKIEALQTIVPGGTELGVDALFEETASYILAL. Residues 47–59 show a composition bias toward acidic residues; the sequence is TDVEDEDEDEEGV.

It belongs to the bHLH protein family. As to quaternary structure, homodimer.

The protein localises to the nucleus. Functionally, atypical bHLH transcription factor that acts as a negative regulator of a variety of shade avoidance syndrome (SAS) responses, including seedling elongation and photosynthetic pigment accumulation. Acts as a direct transcriptional repressor of two auxin-responsive genes, SAUR15 and SAUR68. May function in integrating shade and hormone transcriptional networks in response to light and auxin changes. This is Transcription factor PAR2 (PAR2) from Arabidopsis thaliana (Mouse-ear cress).